The primary structure comprises 104 residues: 11 kDa late embryogenesis abundant protein (104 aa).

Residues 1–24 (MQSGKNAAASAKETAANVAASAKA) show a composition bias toward low complexity. Positions 1-104 (MQSGKNAAAS…TGHRTGTGGI (104 aa)) are disordered. Positions 25–74 (GMEKTKASLQEKGEKMTAHDPMQKEMAREKKEERKHEAEYEKQAAKEHNA) are enriched in basic and acidic residues. Residues 75 to 89 (AQKQTTGIGTGTHSY) are compositionally biased toward polar residues.

The protein belongs to the LEA type 1 family. In terms of tissue distribution, maximally expressed in dry seeds. Also present in mid-maturation embryos.

Functionally, LEA proteins are late embryonic proteins abundant in higher plant seed embryos. They may play an essential role in seed survival and in controlling water exchanges during seed desiccation and imbibition. The protein is 11 kDa late embryogenesis abundant protein of Helianthus annuus (Common sunflower).